The following is an 87-amino-acid chain: MKKLLLLLILLIFAAKVTAEEWAGADEKAEEVIKELKPDYEPWFSPIFEPPSGEIESMLFSLQAAIGSLIIGYFLGYYRGLKHARNA.

A run of 2 helical transmembrane segments spans residues 4-24 (LLLL…EWAG) and 58-78 (MLFS…LGYY).

This sequence belongs to the CbiN family. Forms an energy-coupling factor (ECF) transporter complex composed of an ATP-binding protein (A component, CbiO), a transmembrane protein (T component, CbiQ) and 2 possible substrate-capture proteins (S components, CbiM and CbiN) of unknown stoichimetry.

It localises to the cell membrane. The protein operates within cofactor biosynthesis; adenosylcobalamin biosynthesis. Functionally, part of the energy-coupling factor (ECF) transporter complex CbiMNOQ involved in cobalt import. The polypeptide is Cobalt transport protein CbiN (Archaeoglobus fulgidus (strain ATCC 49558 / DSM 4304 / JCM 9628 / NBRC 100126 / VC-16)).